A 294-amino-acid polypeptide reads, in one-letter code: tRNA dimethylallyltransferase (294 aa).

10–17 contacts ATP; that stretch reads GPTAVGKT. 12-17 lines the substrate pocket; it reads TAVGKT. An interaction with substrate tRNA region spans residues 35–38; sequence DSQQ.

This sequence belongs to the IPP transferase family. Monomer. The cofactor is Mg(2+).

The catalysed reaction is adenosine(37) in tRNA + dimethylallyl diphosphate = N(6)-dimethylallyladenosine(37) in tRNA + diphosphate. Its function is as follows. Catalyzes the transfer of a dimethylallyl group onto the adenine at position 37 in tRNAs that read codons beginning with uridine, leading to the formation of N6-(dimethylallyl)adenosine (i(6)A). The chain is tRNA dimethylallyltransferase from Streptococcus mutans serotype c (strain ATCC 700610 / UA159).